The sequence spans 494 residues: UPF0371 protein SPCG_0344 (494 aa).

Belongs to the UPF0371 family.

This is UPF0371 protein SPCG_0344 from Streptococcus pneumoniae (strain CGSP14).